A 441-amino-acid polypeptide reads, in one-letter code: GTPase Der (441 aa).

EngA-type G domains are found at residues 4–169 (PIVA…PEGS) and 178–353 (PKVA…DAQT). GTP-binding positions include 10 to 17 (GRPNVGKS), 57 to 61 (DTGGI), 120 to 123 (NKVD), 184 to 191 (GKPNVGKS), 231 to 235 (DTAGL), and 296 to 299 (NKWD). Residues 354-438 (MRIPTGVLNE…SIRFINRERK (85 aa)) enclose the KH-like domain.

This sequence belongs to the TRAFAC class TrmE-Era-EngA-EngB-Septin-like GTPase superfamily. EngA (Der) GTPase family. Associates with the 50S ribosomal subunit.

Its function is as follows. GTPase that plays an essential role in the late steps of ribosome biogenesis. This Lachnospira eligens (strain ATCC 27750 / DSM 3376 / VPI C15-48 / C15-B4) (Eubacterium eligens) protein is GTPase Der.